Reading from the N-terminus, the 271-residue chain is Phosphatidylinositol transfer protein beta isoform (271 aa).

Lys-215 bears the N6-acetyllysine mark. Ser-262 is modified (phosphoserine).

The protein belongs to the PtdIns transfer protein family. PI transfer class I subfamily. Post-translationally, constitutive phosphorylation of Ser-262 has no effect on phospholipid transfer activity but is required for Golgi targeting. As to expression, widely expressed in various tissues including brain.

The protein localises to the golgi apparatus. It localises to the golgi apparatus membrane. The protein resides in the endoplasmic reticulum membrane. The enzyme catalyses a 1,2-diacyl-sn-glycero-3-phosphocholine(in) = a 1,2-diacyl-sn-glycero-3-phosphocholine(out). It carries out the reaction a 1,2-diacyl-sn-glycero-3-phospho-(1D-myo-inositol)(in) = a 1,2-diacyl-sn-glycero-3-phospho-(1D-myo-inositol)(out). The catalysed reaction is an N-(acyl)-sphingosylphosphocholine(in) = an N-(acyl)-sphingosylphosphocholine(out). With respect to regulation, phosphatidylinositol transfer activity is inhibited by N-ethylmaleimide. In terms of biological role, catalyzes the transfer of phosphatidylinositol and phosphatidylcholine between membranes. Also catalyzes the transfer of sphingomyelin. Required for COPI-mediated retrograde transport from the Golgi to the endoplasmic reticulum; phosphatidylinositol and phosphatidylcholine transfer activity is essential for this function. The chain is Phosphatidylinositol transfer protein beta isoform (PITPNB) from Homo sapiens (Human).